Consider the following 259-residue polypeptide: Heat-labile enterotoxin IIA, A chain (259 aa).

A signal peptide spans 1 to 18 (MIKHVLLFFVFISFSVSA). Position 23–37 (23–37 (RADSRTPDEIRRAGG)) interacts with NAD(+). The active site involves E128. The cysteines at positions 203 and 215 are disulfide-linked.

It belongs to the enterotoxin A family. Heterohexamer of one A chain and of five B chains.

In terms of biological role, the biological activity of the toxin is produced by the A chain, which activates intracellular adenyl cyclase. The chain is Heat-labile enterotoxin IIA, A chain from Escherichia coli.